The following is a 594-amino-acid chain: Glutamate decarboxylase 1 (594 aa).

Low complexity predominate over residues M1 to S13. The tract at residues M1–N23 is disordered. The residue at position 78 (S78) is a Phosphoserine. Q190 to S192 serves as a coordination point for 4-aminobutanoate. K405 is subject to N6-(pyridoxal phosphate)lysine. R567 lines the 4-aminobutanoate pocket.

The protein belongs to the group II decarboxylase family. In terms of assembly, homodimer. Pyridoxal 5'-phosphate serves as cofactor.

The enzyme catalyses L-glutamate + H(+) = 4-aminobutanoate + CO2. Functionally, catalyzes the synthesis of the inhibitory neurotransmitter gamma-aminobutyric acid (GABA) with pyridoxal 5'-phosphate as cofactor. In Pongo abelii (Sumatran orangutan), this protein is Glutamate decarboxylase 1 (GAD1).